The primary structure comprises 465 residues: Putative mannose-1-phosphate guanylyltransferase (465 aa).

Belongs to the mannose-6-phosphate isomerase type 2 family.

It catalyses the reaction alpha-D-mannose 1-phosphate + GTP + H(+) = GDP-alpha-D-mannose + diphosphate. The protein operates within nucleotide-sugar biosynthesis; GDP-alpha-D-mannose biosynthesis; GDP-alpha-D-mannose from alpha-D-mannose 1-phosphate (GTP route): step 1/1. Its pathway is bacterial outer membrane biogenesis; LPS O-antigen biosynthesis. The sequence is that of Putative mannose-1-phosphate guanylyltransferase (rfbA) from Vibrio cholerae serotype O1 (strain ATCC 39315 / El Tor Inaba N16961).